The sequence spans 102 residues: Large ribosomal subunit protein bL21 (102 aa).

It belongs to the bacterial ribosomal protein bL21 family. In terms of assembly, part of the 50S ribosomal subunit. Contacts protein L20.

In terms of biological role, this protein binds to 23S rRNA in the presence of protein L20. The sequence is that of Large ribosomal subunit protein bL21 from Myxococcus xanthus (strain DK1622).